The primary structure comprises 195 residues: Putative archaetidylserine decarboxylase proenzyme (195 aa).

Catalysis depends on S159, which acts as the Schiff-base intermediate with substrate; via pyruvic acid. The residue at position 159 (S159) is a Pyruvic acid (Ser); by autocatalysis.

The protein belongs to the phosphatidylserine decarboxylase family. PSD-A subfamily. Heterodimer of a large membrane-associated beta subunit and a small pyruvoyl-containing alpha subunit. Requires pyruvate as cofactor. Is synthesized initially as an inactive proenzyme. Formation of the active enzyme involves a self-maturation process in which the active site pyruvoyl group is generated from an internal serine residue via an autocatalytic post-translational modification. Two non-identical subunits are generated from the proenzyme in this reaction, and the pyruvate is formed at the N-terminus of the alpha chain, which is derived from the carboxyl end of the proenzyme. The autoendoproteolytic cleavage occurs by a canonical serine protease mechanism, in which the side chain hydroxyl group of the serine supplies its oxygen atom to form the C-terminus of the beta chain, while the remainder of the serine residue undergoes an oxidative deamination to produce ammonia and the pyruvoyl prosthetic group on the alpha chain. During this reaction, the Ser that is part of the protease active site of the proenzyme becomes the pyruvoyl prosthetic group, which constitutes an essential element of the active site of the mature decarboxylase. In terms of processing, is synthesized initially as an inactive proenzyme. Formation of the active enzyme involves a self-maturation process in which the active site pyruvoyl group is generated from an internal serine residue via an autocatalytic post-translational modification. Two non-identical subunits are generated from the proenzyme in this reaction, and the pyruvate is formed at the N-terminus of the alpha chain, which is derived from the carboxyl end of the proenzyme. The post-translation cleavage follows an unusual pathway, termed non-hydrolytic serinolysis, in which the side chain hydroxyl group of the serine supplies its oxygen atom to form the C-terminus of the beta chain, while the remainder of the serine residue undergoes an oxidative deamination to produce ammonia and the pyruvoyl prosthetic group on the alpha chain.

It localises to the cell membrane. It catalyses the reaction archaetidylserine + H(+) = archaetidylethanolamine + CO2. Its function is as follows. Catalyzes the formation of archaetidylethanolamine (PtdEtn) from archaetidylserine (PtdSer). The chain is Putative archaetidylserine decarboxylase proenzyme from Archaeoglobus fulgidus (strain ATCC 49558 / DSM 4304 / JCM 9628 / NBRC 100126 / VC-16).